Consider the following 264-residue polypeptide: Hydroxyethylthiazole kinase (264 aa).

Residue M45 participates in substrate binding. Positions 121 and 167 each coordinate ATP. Residue G194 coordinates substrate.

Belongs to the Thz kinase family. It depends on Mg(2+) as a cofactor.

The catalysed reaction is 5-(2-hydroxyethyl)-4-methylthiazole + ATP = 4-methyl-5-(2-phosphooxyethyl)-thiazole + ADP + H(+). It participates in cofactor biosynthesis; thiamine diphosphate biosynthesis; 4-methyl-5-(2-phosphoethyl)-thiazole from 5-(2-hydroxyethyl)-4-methylthiazole: step 1/1. Functionally, catalyzes the phosphorylation of the hydroxyl group of 4-methyl-5-beta-hydroxyethylthiazole (THZ). The sequence is that of Hydroxyethylthiazole kinase from Aliivibrio salmonicida (strain LFI1238) (Vibrio salmonicida (strain LFI1238)).